The sequence spans 819 residues: DNA topoisomerase 4 subunit A (819 aa).

Positions 30-496 (LPDIRDGLKP…QIIEIDTASL (467 aa)) constitute a Topo IIA-type catalytic domain. Tyrosine 118 (O-(5'-phospho-DNA)-tyrosine intermediate) is an active-site residue.

The protein belongs to the type II topoisomerase GyrA/ParC subunit family. ParC type 2 subfamily. In terms of assembly, heterotetramer composed of ParC and ParE.

The protein resides in the cell membrane. The enzyme catalyses ATP-dependent breakage, passage and rejoining of double-stranded DNA.. Functionally, topoisomerase IV is essential for chromosome segregation. It relaxes supercoiled DNA. Performs the decatenation events required during the replication of a circular DNA molecule. This chain is DNA topoisomerase 4 subunit A, found in Streptococcus pyogenes serotype M18 (strain MGAS8232).